Consider the following 291-residue polypeptide: ATP synthase subunit b 2 (291 aa).

The chain crosses the membrane as a helical span at residues 2-22 (LIDGFTVVAQIVNFLILVWLL).

This sequence belongs to the ATPase B chain family. F-type ATPases have 2 components, F(1) - the catalytic core - and F(0) - the membrane proton channel. F(1) has five subunits: alpha(3), beta(3), gamma(1), delta(1), epsilon(1). F(0) has three main subunits: a(1), b(2) and c(10-14). The alpha and beta chains form an alternating ring which encloses part of the gamma chain. F(1) is attached to F(0) by a central stalk formed by the gamma and epsilon chains, while a peripheral stalk is formed by the delta and b chains.

Its subcellular location is the cell inner membrane. In terms of biological role, f(1)F(0) ATP synthase produces ATP from ADP in the presence of a proton or sodium gradient. F-type ATPases consist of two structural domains, F(1) containing the extramembraneous catalytic core and F(0) containing the membrane proton channel, linked together by a central stalk and a peripheral stalk. During catalysis, ATP synthesis in the catalytic domain of F(1) is coupled via a rotary mechanism of the central stalk subunits to proton translocation. Its function is as follows. Component of the F(0) channel, it forms part of the peripheral stalk, linking F(1) to F(0). The protein is ATP synthase subunit b 2 of Nitrosospira multiformis (strain ATCC 25196 / NCIMB 11849 / C 71).